A 1060-amino-acid chain; its full sequence is RNA-binding protein 27 (1060 aa).

Composition is skewed to basic and acidic residues over residues 91–102 and 124–143; these read LVQEKEEIKEEV and TRSESSERRTREKKREDGKW. 2 disordered regions span residues 91 to 143 and 162 to 235; these read LVQE…DGKW and WRRG…GAQS. A compositionally biased stretch (basic residues) spans 165 to 185; sequence GRSKSRSKSRGLSRSRSRSRG. The segment covering 186–211 has biased composition (basic and acidic residues); it reads RSKDRDPNRNVEHRERSKFKSERNDL. Polar residues predominate over residues 225-235; it reads SSEQYSSGAQS. Residues 273–301 form a C3H1-type zinc finger; that stretch reads LPPKRRCRDYDERGFCVLGDLCQFDHGND. 2 stretches are compositionally biased toward pro residues: residues 319–356 and 371–384; these read PPPGLPPPPPPGMLMPPMPGPGPGPGPGPGPGPGPGPG and QPPPSVVLPIPRPP. The tract at residues 319–412 is disordered; that stretch reads PPPGLPPPPP…PNLASVGTRL (94 aa). A compositionally biased stretch (polar residues) spans 386-402; that stretch reads TQSSLINSRDQPGTSAV. Residue T447 is modified to Phosphothreonine. Residue R455 is modified to Omega-N-methylarginine. Residues 565-592 form a disordered region; it reads MSGLEGPLTKKPWLGKQGNNNQNKPGFL. Residues 579-588 show a composition bias toward low complexity; that stretch reads GKQGNNNQNK. The RRM domain occupies 600–674; it reads TKLEVKKIPQ…RFIRVLWHRE (75 aa). Positions 809–886 form a coiled coil; sequence VQEVLKKKQE…KDELKTSSAV (78 aa). A Phosphoserine modification is found at S927. Disordered regions lie at residues 940-968 and 1006-1060; these read PVGRGKTMSSQGRGRGRGRGGRGRGSLNH and DRRL…SWRR. A phosphoserine mark is found at S1012 and S1020. The segment covering 1024 to 1053 has biased composition (acidic residues); it reads ETEEEEVKEEETETSDLFLPDDDDEDEDEY.

The protein localises to the cytoplasm. Its subcellular location is the nucleus speckle. May be involved in the turnover of nuclear polyadenylated (pA+) RNA. This chain is RNA-binding protein 27, found in Homo sapiens (Human).